A 73-amino-acid chain; its full sequence is Kazal peptide Pr13a (73 aa).

A signal peptide spans 1-20 (MKYIILFLVLIGLQANLALG). The region spanning 21–73 (SKCKCDCTKYPYSPVCAKELKTGDTETFNNVCQLQCYNCTHMKNYVVIYSGSC) is the Kazal-like domain. Intrachain disulfides connect cysteine 23-cysteine 59, cysteine 27-cysteine 52, and cysteine 36-cysteine 73.

As to expression, expressed by the venom gland (anterior main gland) (at protein level).

The protein resides in the secreted. May act as a serine protease inhibitor, since it possess the kazal serine protease inhibitor signature. The polypeptide is Kazal peptide Pr13a (Platymeris rhadamanthus (Red spot assassin bug)).